The chain runs to 288 residues: Coiled-coil domain-containing protein 190 (288 aa).

Positions 16 to 69 form a coiled coil; that stretch reads LERKSARQAEARLSLRLQRLEIICLYHVKSLAREQRQLQKELQRLQQDIIKKRF. Residues 141 to 235 are disordered; it reads GERTSCFKEG…SSVDYAGSFK (95 aa). The span at 177 to 188 shows a compositional bias: basic and acidic residues; it reads HDQELSTNKTED. Positions 203–213 are enriched in polar residues; that stretch reads ANETRSENASQ.

The protein is Coiled-coil domain-containing protein 190 (Ccdc190) of Mus musculus (Mouse).